An 831-amino-acid polypeptide reads, in one-letter code: Probable glucan 1,3-beta-glucosidase D (831 aa).

Composition is skewed to basic and acidic residues over residues methionine 1–valine 24, arginine 44–glutamate 56, arginine 79–alanine 93, serine 102–arginine 115, arginine 137–alanine 151, and glutamine 198–lysine 213. 2 disordered regions span residues methionine 1–histidine 179 and histidine 192–lysine 241. Topologically, residues methionine 1–lysine 297 are cytoplasmic. Residues tryptophan 298 to valine 318 traverse the membrane as a helical; Signal-anchor for type II membrane protein segment. Residues methionine 319–tyrosine 831 are Extracellular-facing. Asparagine 376, asparagine 381, asparagine 393, asparagine 410, asparagine 442, asparagine 546, and asparagine 558 each carry an N-linked (GlcNAc...) asparagine glycan. The Proton donor role is filled by glutamate 597. Residues asparagine 610, asparagine 636, asparagine 669, and asparagine 689 are each glycosylated (N-linked (GlcNAc...) asparagine). Glutamate 702 serves as the catalytic Nucleophile.

Belongs to the glycosyl hydrolase 5 (cellulase A) family.

The protein localises to the cell membrane. It carries out the reaction Successive hydrolysis of beta-D-glucose units from the non-reducing ends of (1-&gt;3)-beta-D-glucans, releasing alpha-glucose.. Glucosidase involved in the degradation of cellulosic biomass. Active on lichenan. The chain is Probable glucan 1,3-beta-glucosidase D (exgD) from Aspergillus oryzae (strain ATCC 42149 / RIB 40) (Yellow koji mold).